The sequence spans 558 residues: DNA ligase B (558 aa).

Lys-126 serves as the catalytic N6-AMP-lysine intermediate.

The protein belongs to the NAD-dependent DNA ligase family. LigB subfamily.

The enzyme catalyses NAD(+) + (deoxyribonucleotide)n-3'-hydroxyl + 5'-phospho-(deoxyribonucleotide)m = (deoxyribonucleotide)n+m + AMP + beta-nicotinamide D-nucleotide.. Its function is as follows. Catalyzes the formation of phosphodiester linkages between 5'-phosphoryl and 3'-hydroxyl groups in double-stranded DNA using NAD as a coenzyme and as the energy source for the reaction. In Pseudomonas fluorescens (strain Pf0-1), this protein is DNA ligase B.